A 156-amino-acid chain; its full sequence is Probable chemoreceptor glutamine deamidase CheD (156 aa).

Belongs to the CheD family.

It catalyses the reaction L-glutaminyl-[protein] + H2O = L-glutamyl-[protein] + NH4(+). Probably deamidates glutamine residues to glutamate on methyl-accepting chemotaxis receptors (MCPs), playing an important role in chemotaxis. In Bdellovibrio bacteriovorus (strain ATCC 15356 / DSM 50701 / NCIMB 9529 / HD100), this protein is Probable chemoreceptor glutamine deamidase CheD.